Reading from the N-terminus, the 453-residue chain is tRNA modification GTPase MnmE (453 aa).

3 residues coordinate (6S)-5-formyl-5,6,7,8-tetrahydrofolate: Arg22, Glu79, and Lys119. The region spanning 215 to 376 (GMKVVIAGRP…LKQHLKSLMG (162 aa)) is the TrmE-type G domain. Asn225 serves as a coordination point for K(+). GTP-binding positions include 225-230 (NAGKSS), 244-250 (TEIAGTT), 269-272 (DTAG), and 334-337 (NKAD). Position 229 (Ser229) interacts with Mg(2+). Positions 244, 246, and 249 each coordinate K(+). Residue Thr250 participates in Mg(2+) binding. (6S)-5-formyl-5,6,7,8-tetrahydrofolate is bound at residue Lys453.

This sequence belongs to the TRAFAC class TrmE-Era-EngA-EngB-Septin-like GTPase superfamily. TrmE GTPase family. In terms of assembly, homodimer. Heterotetramer of two MnmE and two MnmG subunits. K(+) is required as a cofactor.

The protein localises to the cytoplasm. Its function is as follows. Exhibits a very high intrinsic GTPase hydrolysis rate. Involved in the addition of a carboxymethylaminomethyl (cmnm) group at the wobble position (U34) of certain tRNAs, forming tRNA-cmnm(5)s(2)U34. The protein is tRNA modification GTPase MnmE of Shewanella baltica (strain OS155 / ATCC BAA-1091).